Reading from the N-terminus, the 313-residue chain is Fe-S cluster assembly protein dre2 (313 aa).

Disordered regions lie at residues M1 to R25 and G151 to N187. Residues N20–V145 form an N-terminal SAM-like domain region. A linker region spans residues P146–L203. Positions N159 to G177 are enriched in polar residues. The [2Fe-2S] cluster site is built by C213, C225, C228, and C230. Positions C213–C230 are fe-S binding site A. The [4Fe-4S] cluster site is built by C276, C279, C287, and C290. Short sequence motifs (cx2C motif) lie at residues C276–C279 and C287–C290. The segment at C276–C290 is fe-S binding site B.

It belongs to the anamorsin family. As to quaternary structure, monomer. Interacts with tah18. Interacts with mia40. [2Fe-2S] cluster serves as cofactor. The cofactor is [4Fe-4S] cluster.

The protein localises to the cytoplasm. Its subcellular location is the mitochondrion intermembrane space. Component of the cytosolic iron-sulfur (Fe-S) protein assembly (CIA) machinery required for the maturation of extramitochondrial Fe-S proteins. Part of an electron transfer chain functioning in an early step of cytosolic Fe-S biogenesis, facilitating the de novo assembly of a [4Fe-4S] cluster on the scaffold complex cfd1-nbp35. Electrons are transferred to dre2 from NADPH via the FAD- and FMN-containing protein tah18. Tah18-dre2 are also required for the assembly of the diferric tyrosyl radical cofactor of ribonucleotide reductase (RNR), probably by providing electrons for reduction during radical cofactor maturation in the catalytic small subunit rnr2. The chain is Fe-S cluster assembly protein dre2 from Aspergillus flavus (strain ATCC 200026 / FGSC A1120 / IAM 13836 / NRRL 3357 / JCM 12722 / SRRC 167).